A 519-amino-acid polypeptide reads, in one-letter code: Maturase K (519 aa).

It belongs to the intron maturase 2 family. MatK subfamily.

Its subcellular location is the plastid. The protein localises to the chloroplast. In terms of biological role, usually encoded in the trnK tRNA gene intron. Probably assists in splicing its own and other chloroplast group II introns. The sequence is that of Maturase K from Aesculus pavia (Red buckeye).